The following is a 973-amino-acid chain: NLR family member X1 (973 aa).

The transit peptide at 1–84 (MRWGCHLPRT…EAIQRHRRNL (84 aa)) directs the protein to the mitochondrion. The tract at residues 73-554 (ATEAIQRHRR…RILPLLFNLL (482 aa)) is required for interaction with MAVS. The NACHT domain occupies 158–481 (QTVVLYGTVG…LRFFLAPCVE (324 aa)). 164–171 (GTVGTGKS) is an ATP binding site. The segment at 554–972 (LKVVPRVFGR…TLLEQLGGSG (419 aa)) is required for the repression of MAVS-induced interferon signaling. The LRRNT domain maps to 665–692 (RQVLPPSELLDHLFFHYEFQNQRFSAEV). 8 LRR repeats span residues 693-716 (LGSL…VVAS), 722-745 (RHPL…TLMP), 747-775 (LLRA…LLHD), 776-799 (QCQI…VLMD), 809-832 (HLSL…LDRN), 833-855 (KQLQ…ALAK), 856-875 (AARK…ELSS), and 876-897 (EGRQ…VVAS). In terms of domain architecture, LRRCT spans 904 to 968 (VSEYWSVILS…SEVKTLLEQL (65 aa)).

This sequence belongs to the NLRP family. In terms of assembly, homohexamer. Interacts with MAVS. Interacts with TUFM.

The protein resides in the mitochondrion outer membrane. In terms of biological role, participates in antiviral signaling. Acts as a negative regulator of MAVS-mediated antiviral responses, through the inhibition of the virus-induced RLH (RIG-like helicase)-MAVS interaction. Instead, promotes autophagy by interacting with TUFM and subsequently recruiting the autophagy-related proteins ATG5 and ATG12. Also regulates MAVS-dependent NLRP3 inflammasome activation to attenuate apoptosis. Has no inhibitory function on NF-kappa-B signaling pathway, but enhances NF-kappa-B and JUN N-terminal kinase dependent signaling through the production of reactive oxygen species. Regulates viral mediated-inflammation and energy metabolism in a sex-dependent manner. In females, prevents uncontrolled inflammation and energy metabolism and thus, may contribute to the sex differences observed in infectious and inflammatory diseases. This is NLR family member X1 (Nlrx1) from Rattus norvegicus (Rat).